Reading from the N-terminus, the 175-residue chain is Protein LpfE (175 aa).

The N-terminal stretch at 1 to 20 is a signal peptide; that stretch reads MKNLHALMPACLLLTASAMA.

It belongs to the fimbrial protein family.

The protein resides in the fimbrium. In Salmonella typhimurium (strain LT2 / SGSC1412 / ATCC 700720), this protein is Protein LpfE (lpfE).